Consider the following 238-residue polypeptide: Ribonuclease PH (238 aa).

Residues Arg-86 and 124–126 (GTR) contribute to the phosphate site.

Belongs to the RNase PH family. As to quaternary structure, homohexameric ring arranged as a trimer of dimers.

It catalyses the reaction tRNA(n+1) + phosphate = tRNA(n) + a ribonucleoside 5'-diphosphate. Its function is as follows. Phosphorolytic 3'-5' exoribonuclease that plays an important role in tRNA 3'-end maturation. Removes nucleotide residues following the 3'-CCA terminus of tRNAs; can also add nucleotides to the ends of RNA molecules by using nucleoside diphosphates as substrates, but this may not be physiologically important. Probably plays a role in initiation of 16S rRNA degradation (leading to ribosome degradation) during starvation. This Haemophilus influenzae (strain PittGG) protein is Ribonuclease PH.